Reading from the N-terminus, the 592-residue chain is MGVTIRNRNYDHGSLPFLQSLLAILLVTTTTLHINGVEAFHEIHYNLQSVGAENVKQVHRTGYHFQPKQNWINDPNGPMYYKGVYHLFYQYNPKGAVWGNIVWAHSVSTDLINWTPLEPAIFPSKPFDKYGCRSGSATILPGNKPVILYTGIVEGPPKNVQVQNYAIPANLSDPYLRKWIKPDNNPLVVANNGENATAFRDPTTAWLDKSGHWKMLVGSKRNRRGIAYLYRSKDFIKWTKAKHPIHSQANTGMWECPDFFPVSLKGLNGLDTSVTGESVKHVLKVSLDLTRYEYYTVGTYLTDKDRYIPDNTSVDGWAGLRYDYGNFYASKTFFDPSKNRRILWGWANESDSTAHDVAKGWAGIQLIPRTLWLDPSGKQLMQWPIEELETLRGSKVKFSRKQDLSKGILVEVKGITAAQADVEVTFSFKSLAKREPFDPKWLEYDAEKICSLKGSTVQGGVGPFGLLTLASEKLEEYTPVFFRVFKAQNTHKVLMCSDATRSSLKEGLYRPSFAGFVDVDLATDKKISLRSLIDNSVVESFGAKGKTCISSRVYPTLAVYENAHLYVFNNGSETITVENLDAWSMKKPLRMN.

Positions 1-39 (MGVTIRNRNYDHGSLPFLQSLLAILLVTTTTLHINGVEA) are cleaved as a signal peptide. Positions 40–48 (FHEIHYNLQ) are excised as a propeptide. Aspartate 74 is an active-site residue. A glycan (N-linked (GlcNAc...) (complex) asparagine) is linked at asparagine 170. N-linked (GlcNAc...) asparagine glycosylation occurs at asparagine 195. A glycan (N-linked (GlcNAc...) (complex) asparagine) is linked at asparagine 311. The N-linked (GlcNAc...) (high mannose) asparagine glycan is linked to asparagine 348. N-linked (GlcNAc...) asparagine glycosylation is present at asparagine 570.

This sequence belongs to the glycosyl hydrolase 32 family. As to expression, in leaves and roots of young plants.

It localises to the secreted. The protein resides in the cell wall. The catalysed reaction is Hydrolysis of terminal non-reducing beta-D-fructofuranoside residues in beta-D-fructofuranosides.. May play an important role in phloem unloading and in stress response. In Daucus carota (Wild carrot), this protein is Beta-fructofuranosidase, insoluble isoenzyme 1 (INV1).